A 127-amino-acid chain; its full sequence is MAKQSLDVSSDRRKARKAYFTAPSSQRRVLLSAPLSKELRAQYGIKALPIRRDDEVLVVRGSKKGQEGKISSVYRLKFAVQVDKVTKEKVNGASVPINLHPSKLVITKLHLDKDRKALIQRKGGKLE.

It belongs to the universal ribosomal protein uL24 family. In terms of assembly, component of the large ribosomal subunit (LSU). Mature yeast ribosomes consist of a small (40S) and a large (60S) subunit. The 40S small subunit contains 1 molecule of ribosomal RNA (18S rRNA) and 33 different proteins (encoded by 57 genes). The large 60S subunit contains 3 rRNA molecules (25S, 5.8S and 5S rRNA) and 46 different proteins (encoded by 81 genes).

It localises to the cytoplasm. Functionally, component of the ribosome, a large ribonucleoprotein complex responsible for the synthesis of proteins in the cell. The small ribosomal subunit (SSU) binds messenger RNAs (mRNAs) and translates the encoded message by selecting cognate aminoacyl-transfer RNA (tRNA) molecules. The large subunit (LSU) contains the ribosomal catalytic site termed the peptidyl transferase center (PTC), which catalyzes the formation of peptide bonds, thereby polymerizing the amino acids delivered by tRNAs into a polypeptide chain. The nascent polypeptides leave the ribosome through a tunnel in the LSU and interact with protein factors that function in enzymatic processing, targeting, and the membrane insertion of nascent chains at the exit of the ribosomal tunnel. This is Large ribosomal subunit protein uL24A from Saccharomyces cerevisiae (strain ATCC 204508 / S288c) (Baker's yeast).